Reading from the N-terminus, the 404-residue chain is Phosphopentomutase (404 aa).

Mn(2+)-binding residues include Asp10, Asp303, His308, Asp344, His345, and His356.

Belongs to the phosphopentomutase family. The cofactor is Mn(2+).

Its subcellular location is the cytoplasm. It carries out the reaction 2-deoxy-alpha-D-ribose 1-phosphate = 2-deoxy-D-ribose 5-phosphate. The enzyme catalyses alpha-D-ribose 1-phosphate = D-ribose 5-phosphate. The protein operates within carbohydrate degradation; 2-deoxy-D-ribose 1-phosphate degradation; D-glyceraldehyde 3-phosphate and acetaldehyde from 2-deoxy-alpha-D-ribose 1-phosphate: step 1/2. Functionally, isomerase that catalyzes the conversion of deoxy-ribose 1-phosphate (dRib-1-P) and ribose 1-phosphate (Rib-1-P) to deoxy-ribose 5-phosphate (dRib-5-P) and ribose 5-phosphate (Rib-5-P), respectively. In Shewanella oneidensis (strain ATCC 700550 / JCM 31522 / CIP 106686 / LMG 19005 / NCIMB 14063 / MR-1), this protein is Phosphopentomutase.